Here is a 411-residue protein sequence, read N- to C-terminus: Alpha-galactosidase (411 aa).

The N-terminal stretch at Met1 to Gly24 is a signal peptide. Residues Gly25–Leu47 constitute a propeptide that is removed on maturation. Asn32 is a glycosylation site (N-linked (GlcNAc...) asparagine). The cysteines at positions 68 and 100 are disulfide-linked. N-linked (GlcNAc...) asparagine glycosylation occurs at Asn145. Cys148 and Cys179 are joined by a disulfide. The active-site Nucleophile is Asp177. Glu210 to Glu214 contributes to the substrate binding site. Asp232 acts as the Proton donor in catalysis. An N-linked (GlcNAc...) asparagine glycan is attached at Asn352.

It belongs to the glycosyl hydrolase 27 family.

It catalyses the reaction Hydrolysis of terminal, non-reducing alpha-D-galactose residues in alpha-D-galactosides, including galactose oligosaccharides, galactomannans and galactolipids.. In terms of biological role, involved in the hydrolysis of the galactomannan, it splits alpha-linked galactose moieties. It is particularly suitable for the hydrolysis of guar gum to a gum with improved gelling properties. Preferentially cleaves alpha-1,6 glycoside linkages. The protein is Alpha-galactosidase of Cyamopsis tetragonoloba (Guar).